The chain runs to 304 residues: tRNA dimethylallyltransferase (304 aa).

8 to 15 (GPTASGKS) contacts ATP. 10–15 (TASGKS) provides a ligand contact to substrate. Residues 33–36 (DSRQ) are interaction with substrate tRNA.

This sequence belongs to the IPP transferase family. As to quaternary structure, monomer. Mg(2+) serves as cofactor.

It carries out the reaction adenosine(37) in tRNA + dimethylallyl diphosphate = N(6)-dimethylallyladenosine(37) in tRNA + diphosphate. Functionally, catalyzes the transfer of a dimethylallyl group onto the adenine at position 37 in tRNAs that read codons beginning with uridine, leading to the formation of N6-(dimethylallyl)adenosine (i(6)A). This is tRNA dimethylallyltransferase from Chlorobium luteolum (strain DSM 273 / BCRC 81028 / 2530) (Pelodictyon luteolum).